The chain runs to 221 residues: Putative 3-methyladenine DNA glycosylase (221 aa).

It belongs to the DNA glycosylase MPG family.

This is Putative 3-methyladenine DNA glycosylase from Herpetosiphon aurantiacus (strain ATCC 23779 / DSM 785 / 114-95).